Consider the following 539-residue polypeptide: Sodium/hydrogen exchanger 9B2 (539 aa).

Residues 1 to 94 (MEDSLFSVDK…ACPPQGCFSL (94 aa)) lie on the Cytoplasmic side of the membrane. Residues 95 to 112 (AITNVTMVILIWAVVWSI) form a helical membrane-spanning segment. At 113–121 (TGPECLPGG) the chain is on the extracellular side. The helical transmembrane segment at 122–141 (NLFGILALLFSAALGGKLIS) threads the bilayer. The Cytoplasmic portion of the chain corresponds to 142–152 (LIKIPSLPPLP). A helical membrane pass occupies residues 153 to 169 (PLLGMLLAGFLIRNIPV). Residues 170–179 (ITDQVQIHHK) are Extracellular-facing. Residues 180 to 197 (WSAALRNIALAIILVRAG) form a helical membrane-spanning segment. Residues 198–208 (LGLDPKALRKL) are Cytoplasmic-facing. Residues 209–235 (KAVCLRLSFGPCVVESCTAAVVSHFIM) form a helical membrane-spanning segment. Residues 236-241 (GFPLTW) are Extracellular-facing. The chain crosses the membrane as a helical span at residues 242-250 (GFMLGFVLG). The Cytoplasmic portion of the chain corresponds to 251 to 278 (AVSPAVVVPSMLILQKEGFGVDKGIPTL). Val252, Gly283, Asp286, and Asp287 together coordinate Na(+). A helical transmembrane segment spans residues 279-298 (LMAAGSFDDVLAITGFNTCL). Residues 299-308 (GMAFSSGSTL) lie on the Extracellular side of the membrane. A helical membrane pass occupies residues 309–332 (NTIVRGVLEVVVGIAAGLLFGFFL). The Cytoplasmic portion of the chain corresponds to 333 to 347 (HYFPSKDQENLKGKR). A helical membrane pass occupies residues 348 to 365 (SYLILALSVFAVFGSLYF). Residues 366-369 (GFPG) lie on the Extracellular side of the membrane. The chain crosses the membrane as a helical span at residues 370-381 (SGGLCTLVMAFL). The Cytoplasmic portion of the chain corresponds to 382–398 (AGIGWSTDKTVVEDIIA). The helical transmembrane segment at 399-419 (VSWDIFQPLLFGLIGAEISVA) threads the bilayer. Topologically, residues 420 to 425 (SLKPET) are extracellular. Residues 426 to 448 (VGLCTATLIIALIIRICISFLMV) traverse the membrane as a helical segment. At 449-469 (CFSGFSLKEKIFISLAWMPKA) the chain is on the cytoplasmic side. A helical transmembrane segment spans residues 470 to 481 (TVQAAIGSVALD). Residues 482 to 494 (TARTLENKQFEDY) are Extracellular-facing. The helical transmembrane segment at 495–517 (GMDVLTVAFLGILVTAPIGALVI) threads the bilayer. Topologically, residues 518–539 (GLTGPKMLEKSESRTVTEEGSV) are cytoplasmic.

Belongs to the monovalent cation:proton antiporter 1 (CPA1) transporter (TC 2.A.36) family. In terms of assembly, homodimer; dimerization is essential for SLC9B2 activity. Lipids seem to play a role in the stabilization of the dimerization subdomain.

The protein resides in the cell membrane. Its subcellular location is the mitochondrion membrane. It is found in the endosome membrane. The protein localises to the recycling endosome membrane. It localises to the cytoplasmic vesicle. The protein resides in the secretory vesicle. Its subcellular location is the synaptic vesicle membrane. It is found in the basolateral cell membrane. The protein localises to the apical cell membrane. It carries out the reaction Li(+)(out) + H(+)(in) = Li(+)(in) + H(+)(out). The enzyme catalyses Li(+)(in) + Na(+)(out) = Li(+)(out) + Na(+)(in). The catalysed reaction is Na(+)(in) + H(+)(out) = Na(+)(out) + H(+)(in). With respect to regulation, allosterically inhibited by the N-terminal domain. Inhibited by phloretin. In terms of biological role, electroneutral Na(+) Li(+)/H(+) antiporter that extrudes Na(+) or Li(+) in exchange for external protons across the membrane. Uses the proton gradient/membrane potential to extrude sodium. Contributes to the regulation of intracellular pH and sodium homeostasis. Also able to mediate Na(+)/Li(+) antiporter activity in kidney. The chain is Sodium/hydrogen exchanger 9B2 (slc9b2) from Xenopus tropicalis (Western clawed frog).